The following is a 177-amino-acid chain: ATP synthase subunit b (177 aa).

The helical transmembrane segment at 15–35 (GISGGTIIYQLLMFIILLALL) threads the bilayer.

It belongs to the ATPase B chain family. F-type ATPases have 2 components, F(1) - the catalytic core - and F(0) - the membrane proton channel. F(1) has five subunits: alpha(3), beta(3), gamma(1), delta(1), epsilon(1). F(0) has three main subunits: a(1), b(2) and c(10-14). The alpha and beta chains form an alternating ring which encloses part of the gamma chain. F(1) is attached to F(0) by a central stalk formed by the gamma and epsilon chains, while a peripheral stalk is formed by the delta and b chains.

The protein localises to the cell membrane. Its function is as follows. F(1)F(0) ATP synthase produces ATP from ADP in the presence of a proton or sodium gradient. F-type ATPases consist of two structural domains, F(1) containing the extramembraneous catalytic core and F(0) containing the membrane proton channel, linked together by a central stalk and a peripheral stalk. During catalysis, ATP synthesis in the catalytic domain of F(1) is coupled via a rotary mechanism of the central stalk subunits to proton translocation. Functionally, component of the F(0) channel, it forms part of the peripheral stalk, linking F(1) to F(0). In Geobacillus kaustophilus (strain HTA426), this protein is ATP synthase subunit b.